Consider the following 281-residue polypeptide: Ribosomal RNA small subunit methyltransferase A (281 aa).

6 residues coordinate S-adenosyl-L-methionine: asparagine 25, leucine 27, glycine 52, glutamate 73, aspartate 99, and asparagine 118.

It belongs to the class I-like SAM-binding methyltransferase superfamily. rRNA adenine N(6)-methyltransferase family. RsmA subfamily.

Its subcellular location is the cytoplasm. It carries out the reaction adenosine(1518)/adenosine(1519) in 16S rRNA + 4 S-adenosyl-L-methionine = N(6)-dimethyladenosine(1518)/N(6)-dimethyladenosine(1519) in 16S rRNA + 4 S-adenosyl-L-homocysteine + 4 H(+). Functionally, specifically dimethylates two adjacent adenosines (A1518 and A1519) in the loop of a conserved hairpin near the 3'-end of 16S rRNA in the 30S particle. May play a critical role in biogenesis of 30S subunits. The protein is Ribosomal RNA small subunit methyltransferase A of Erythrobacter litoralis (strain HTCC2594).